A 470-amino-acid polypeptide reads, in one-letter code: UDP-N-acetylmuramate--L-alanine ligase (470 aa).

Gly118–Thr124 is a binding site for ATP.

It belongs to the MurCDEF family.

The protein localises to the cytoplasm. It catalyses the reaction UDP-N-acetyl-alpha-D-muramate + L-alanine + ATP = UDP-N-acetyl-alpha-D-muramoyl-L-alanine + ADP + phosphate + H(+). The protein operates within cell wall biogenesis; peptidoglycan biosynthesis. In terms of biological role, cell wall formation. This chain is UDP-N-acetylmuramate--L-alanine ligase, found in Cereibacter sphaeroides (strain ATCC 17025 / ATH 2.4.3) (Rhodobacter sphaeroides).